The sequence spans 380 residues: Cysteine protease ATG4A (380 aa).

The Nucleophile role is filled by C60. Active-site residues include D262 and H264. Positions 375–378 match the LIR motif; it reads FEIL.

Belongs to the peptidase C54 family.

Its subcellular location is the cytoplasm. The enzyme catalyses [protein]-C-terminal L-amino acid-glycyl-phosphatidylethanolamide + H2O = [protein]-C-terminal L-amino acid-glycine + a 1,2-diacyl-sn-glycero-3-phosphoethanolamine. Its function is as follows. Cysteine protease that plays a key role in autophagy by mediating both proteolytic activation and delipidation of ATG8 family proteins. The protease activity is required for proteolytic activation of ATG8 family proteins: cleaves the C-terminal amino acid of ATG8 proteins to reveal a C-terminal glycine. Exposure of the glycine at the C-terminus is essential for ATG8 proteins conjugation to phosphatidylethanolamine (PE) and insertion to membranes, which is necessary for autophagy. Protease activity is also required to counteract formation of high-molecular weight conjugates of ATG8 proteins (ATG8ylation): acts as a deubiquitinating-like enzyme that removes ATG8 conjugated to other proteins, such as ATG3. In addition to the protease activity, also mediates delipidation of ATG8 family proteins. Catalyzes delipidation of PE-conjugated forms of ATG8 proteins during macroautophagy. The polypeptide is Cysteine protease ATG4A (Gallus gallus (Chicken)).